The primary structure comprises 347 residues: Histone deacetylase 11 (347 aa).

Residues 14–326 (TRWPIVYSPR…LNLFGLGLIG (313 aa)) are histone deacetylase. Residue His143 is part of the active site.

The protein belongs to the histone deacetylase family. As to quaternary structure, interacts with HDAC6. Weakly expressed in most tissues. Strongly expressed in brain, heart, skeletal muscle, kidney and testis.

It is found in the nucleus. The enzyme catalyses N(6)-acetyl-L-lysyl-[histone] + H2O = L-lysyl-[histone] + acetate. Its function is as follows. Responsible for the deacetylation of lysine residues on the N-terminal part of the core histones (H2A, H2B, H3 and H4). Histone deacetylation gives a tag for epigenetic repression and plays an important role in transcriptional regulation, cell cycle progression and developmental events. Histone deacetylases act via the formation of large multiprotein complexes. In Homo sapiens (Human), this protein is Histone deacetylase 11 (HDAC11).